Reading from the N-terminus, the 178-residue chain is Oligoribonuclease (178 aa).

Positions Leu-7–Leu-168 constitute an Exonuclease domain. Residue Tyr-128 is part of the active site.

Belongs to the oligoribonuclease family.

It localises to the cytoplasm. Functionally, 3'-to-5' exoribonuclease specific for small oligoribonucleotides. The chain is Oligoribonuclease from Francisella tularensis subsp. holarctica (strain FTNF002-00 / FTA).